A 132-amino-acid polypeptide reads, in one-letter code: Small ribosomal subunit protein uS8 (132 aa).

It belongs to the universal ribosomal protein uS8 family. As to quaternary structure, part of the 30S ribosomal subunit. Contacts proteins S5 and S12.

In terms of biological role, one of the primary rRNA binding proteins, it binds directly to 16S rRNA central domain where it helps coordinate assembly of the platform of the 30S subunit. This is Small ribosomal subunit protein uS8 from Afipia carboxidovorans (strain ATCC 49405 / DSM 1227 / KCTC 32145 / OM5) (Oligotropha carboxidovorans).